Here is a 5121-residue protein sequence, read N- to C-terminus: Hydrocephalus-inducing protein homolog (5121 aa).

The tract at residues E363–G754 is interaction with KIF9. Positions L956 to A967 are enriched in basic residues. 7 disordered regions span residues L956–F987, L1925–S1951, S2155–G2186, E2333–T2459, L2482–E2534, T2664–M2684, and K3852–T3874. The stretch at E1908–D1933 forms a coiled coil. Residues S1936–S1951 are compositionally biased toward polar residues. Residues A2267–K2365 are a coiled coil. Composition is skewed to basic and acidic residues over residues E2333 to K2360, V2393 to N2418, D2444 to L2453, E2489 to R2498, and K2509 to E2534. A coiled-coil region spans residues G2504–E2549. Polar residues-rich tracts occupy residues T2664 to G2679 and G3857 to T3874.

Interacts with KIF9.

It localises to the cell projection. It is found in the cilium. The protein resides in the cytoplasm. The protein localises to the cytoskeleton. Its subcellular location is the cilium axoneme. It localises to the flagellum. Functionally, required for ciliary motility. This chain is Hydrocephalus-inducing protein homolog (HYDIN), found in Homo sapiens (Human).